The sequence spans 66 residues: Small ribosomal subunit protein bS21B (66 aa).

Residues 38–66 (YVKPTQKRKIAKKAAISKAKKEARRSYSY) form a disordered region.

The protein belongs to the bacterial ribosomal protein bS21 family.

The sequence is that of Small ribosomal subunit protein bS21B from Francisella tularensis subsp. tularensis (strain SCHU S4 / Schu 4).